The chain runs to 272 residues: Phosphonates import ATP-binding protein PhnC (272 aa).

The ABC transporter domain maps to 2-246; sequence LELQRLTKTY…VLATIYGAED (245 aa). 35–42 provides a ligand contact to ATP; it reads GPSGAGKS. The segment at 248–272 is disordered; the sequence is ASSGREPAPEREPEDTERHLAEVGR. Positions 254–272 are enriched in basic and acidic residues; that stretch reads PAPEREPEDTERHLAEVGR.

This sequence belongs to the ABC transporter superfamily. Phosphonates importer (TC 3.A.1.9.1) family. The complex is composed of two ATP-binding proteins (PhnC), two transmembrane proteins (PhnE) and a solute-binding protein (PhnD).

Its subcellular location is the cell inner membrane. The catalysed reaction is phosphonate(out) + ATP + H2O = phosphonate(in) + ADP + phosphate + H(+). Part of the ABC transporter complex PhnCDE involved in phosphonates import. Responsible for energy coupling to the transport system. The polypeptide is Phosphonates import ATP-binding protein PhnC (Chromohalobacter salexigens (strain ATCC BAA-138 / DSM 3043 / CIP 106854 / NCIMB 13768 / 1H11)).